The following is a 204-amino-acid chain: MSFTVDDRVLALAGIAQALQQVRRIADTGHSDAAAVRTAVDSVFRVDASSPQEVFGDRHALKSGLRLLHNYFRSQGQDPILPKLALSVLQLERRFVQDGATVNKVASGIERAQRQANELGDSGHPDVLANLGGLYADTISHLKPRVMVQGNPHYLGQAGVVAEIRALLLAAVRAAVLWRQLGGSYWDFLFGRKAMIEAVDRQLA.

This sequence belongs to the HflD family.

It localises to the cytoplasm. The protein localises to the cell inner membrane. In Stenotrophomonas maltophilia (strain K279a), this protein is High frequency lysogenization protein HflD homolog.